The sequence spans 123 residues: Large ribosomal subunit protein uL18 (123 aa).

It belongs to the universal ribosomal protein uL18 family. In terms of assembly, part of the 50S ribosomal subunit; part of the 5S rRNA/L5/L18/L25 subcomplex. Contacts the 5S and 23S rRNAs.

Functionally, this is one of the proteins that bind and probably mediate the attachment of the 5S RNA into the large ribosomal subunit, where it forms part of the central protuberance. This chain is Large ribosomal subunit protein uL18, found in Bifidobacterium animalis subsp. lactis (strain AD011).